The sequence spans 424 residues: Cytoplasmic tRNA 2-thiolation protein 2 (424 aa).

The interval 357 to 385 (PAAPETEEEEELSKKAHMEKSQEKTGDAD) is disordered. Basic and acidic residues predominate over residues 368 to 385 (LSKKAHMEKSQEKTGDAD).

This sequence belongs to the CTU2/NCS2 family.

The protein resides in the cytoplasm. The protein operates within tRNA modification; 5-methoxycarbonylmethyl-2-thiouridine-tRNA biosynthesis. In terms of biological role, plays a central role in 2-thiolation of mcm(5)S(2)U at tRNA wobble positions of tRNA(Lys), tRNA(Glu) and tRNA(Gln). May act by forming a heterodimer with NCS6 that ligates sulfur from thiocarboxylated URM1 onto the uridine of tRNAs at wobble position. Prior mcm(5) tRNA modification by the elongator complex is required for 2-thiolation. May also be involved in protein urmylation. The protein is Cytoplasmic tRNA 2-thiolation protein 2 of Yarrowia lipolytica (strain CLIB 122 / E 150) (Yeast).